Consider the following 446-residue polypeptide: GTPase Der (446 aa).

EngA-type G domains lie at 2–166 (TVVA…PEAP) and 179–354 (IRVS…RQYN). Residues 8-15 (GRPNVGKS), 55-59 (DTAGF), 118-121 (NKID), 185-192 (GRPNVGKS), 232-236 (DTAGI), and 297-300 (NKWD) contribute to the GTP site. Residues 355-440 (QRVTTGIVNR…PIRLIFRPRQ (86 aa)) form the KH-like domain.

It belongs to the TRAFAC class TrmE-Era-EngA-EngB-Septin-like GTPase superfamily. EngA (Der) GTPase family. As to quaternary structure, associates with the 50S ribosomal subunit.

GTPase that plays an essential role in the late steps of ribosome biogenesis. The protein is GTPase Der of Syntrophobacter fumaroxidans (strain DSM 10017 / MPOB).